The primary structure comprises 176 residues: Outer membrane protein assembly factor BamE (176 aa).

The N-terminal stretch at 1 to 21 (MQNAKLMLTCLAFAGLAALAG) is a signal peptide. Cysteine 22 carries N-palmitoyl cysteine lipidation. Cysteine 22 is lipidated: S-diacylglycerol cysteine. The tract at residues 121-176 (KEGSTTVTQPADQQKPEAQKEEPPKPGSTLEQLQREVDEAQPVPVPTPEPLDPSPQ) is disordered. Polar residues predominate over residues 123-132 (GSTTVTQPAD). Positions 134 to 144 (QKPEAQKEEPP) are enriched in basic and acidic residues. Pro residues predominate over residues 163-176 (VPVPTPEPLDPSPQ).

This sequence belongs to the BamE family. In terms of assembly, part of the Bam complex.

Its subcellular location is the cell outer membrane. Its function is as follows. Part of the outer membrane protein assembly complex, which is involved in assembly and insertion of beta-barrel proteins into the outer membrane. May have a structural role in maintaining the cell envelope integrity. In Pseudomonas aeruginosa (strain ATCC 15692 / DSM 22644 / CIP 104116 / JCM 14847 / LMG 12228 / 1C / PRS 101 / PAO1), this protein is Outer membrane protein assembly factor BamE.